The chain runs to 157 residues: Cyclic pyranopterin monophosphate synthase (157 aa).

Residues methionine 74 to histidine 76 and methionine 112 to glutamate 113 each bind substrate. Aspartate 127 is a catalytic residue.

This sequence belongs to the MoaC family. Homohexamer; trimer of dimers.

The enzyme catalyses (8S)-3',8-cyclo-7,8-dihydroguanosine 5'-triphosphate = cyclic pyranopterin phosphate + diphosphate. It functions in the pathway cofactor biosynthesis; molybdopterin biosynthesis. Its function is as follows. Catalyzes the conversion of (8S)-3',8-cyclo-7,8-dihydroguanosine 5'-triphosphate to cyclic pyranopterin monophosphate (cPMP). The sequence is that of Cyclic pyranopterin monophosphate synthase from Syntrophomonas wolfei subsp. wolfei (strain DSM 2245B / Goettingen).